The chain runs to 272 residues: NH(3)-dependent NAD(+) synthetase (272 aa).

ATP is bound at residue 45 to 52 (GISGGQDS). Aspartate 51 provides a ligand contact to Mg(2+). Arginine 138 serves as a coordination point for deamido-NAD(+). Threonine 158 contributes to the ATP binding site. Glutamate 163 provides a ligand contact to Mg(2+). 2 residues coordinate deamido-NAD(+): lysine 171 and aspartate 178. ATP is bound by residues lysine 187 and threonine 209. 258–259 (HK) lines the deamido-NAD(+) pocket.

It belongs to the NAD synthetase family. Homodimer.

It carries out the reaction deamido-NAD(+) + NH4(+) + ATP = AMP + diphosphate + NAD(+) + H(+). The protein operates within cofactor biosynthesis; NAD(+) biosynthesis; NAD(+) from deamido-NAD(+) (ammonia route): step 1/1. Catalyzes the ATP-dependent amidation of deamido-NAD to form NAD. Uses ammonia as a nitrogen source. This Bacillus cereus (strain G9842) protein is NH(3)-dependent NAD(+) synthetase.